Consider the following 129-residue polypeptide: Phosphoribosyl-AMP cyclohydrolase (129 aa).

D94 contacts Mg(2+). C95 serves as a coordination point for Zn(2+). D96 and D98 together coordinate Mg(2+). The Zn(2+) site is built by C111 and C118.

The protein belongs to the PRA-CH family. Homodimer. Requires Mg(2+) as cofactor. The cofactor is Zn(2+).

The protein resides in the cytoplasm. It carries out the reaction 1-(5-phospho-beta-D-ribosyl)-5'-AMP + H2O = 1-(5-phospho-beta-D-ribosyl)-5-[(5-phospho-beta-D-ribosylamino)methylideneamino]imidazole-4-carboxamide. The protein operates within amino-acid biosynthesis; L-histidine biosynthesis; L-histidine from 5-phospho-alpha-D-ribose 1-diphosphate: step 3/9. Catalyzes the hydrolysis of the adenine ring of phosphoribosyl-AMP. The polypeptide is Phosphoribosyl-AMP cyclohydrolase (Corynebacterium efficiens (strain DSM 44549 / YS-314 / AJ 12310 / JCM 11189 / NBRC 100395)).